A 108-amino-acid polypeptide reads, in one-letter code: MEEILIVTTNEVAGYRITEVYGEVFGLTTRSRNLFSSAGQQMKTVVGGEINGYTKLQHETRETSIDRMREEAKAKGANAIVAMRFDSSTFQNIDSVAAYGTAVKIEKI.

This sequence belongs to the UPF0145 family.

In Lactococcus lactis subsp. lactis (strain IL1403) (Streptococcus lactis), this protein is UPF0145 protein YjfJ (yjfJ).